We begin with the raw amino-acid sequence, 518 residues long: Macrophage receptor MARCO (518 aa).

Over 1–48 the chain is Cytoplasmic; that stretch reads MGSKELLKEEDFLGSTEDRADFDQAMFPVMETFEINDPVPKKRNGGTF. Residues 49 to 69 traverse the membrane as a helical; Signal-anchor for type II membrane protein segment; it reads CMAVMAIHLILLTAGTALLLI. Residues 70–518 are Extracellular-facing; it reads QVLNLQEQLQ…HNEDAGVECS (449 aa). N-linked (GlcNAc...) asparagine glycosylation is found at Asn-87 and Asn-138. The interval 147–426 is disordered; that stretch reads QIKGERGSPG…GESFQRVRIM (280 aa). The region spanning 149-418 is the Collagen-like domain; that stretch reads KGERGSPGPK…QKGEKGQKGE (270 aa). Over residues 154-163 the composition is skewed to low complexity; that stretch reads SPGPKGAPGA. Over residues 239-250 the composition is skewed to basic and acidic residues; the sequence is KGEHGTKGDKGD. 2 stretches are compositionally biased toward low complexity: residues 293-314 and 325-344; these read PGVK…QGAP and RTGL…PGIA. Residues 410-421 show a composition bias toward basic and acidic residues; the sequence is KGEKGQKGESFQ. Residues 423-518 enclose the SRCR domain; that stretch reads VRIMGGTNRG…HNEDAGVECS (96 aa). Intrachain disulfides connect Cys-446/Cys-507, Cys-459/Cys-517, and Cys-487/Cys-497.

As to quaternary structure, homotrimer; disulfide-linked. Trimers may assemble in larger oligomers thus resulting in the creation of a large surface capable of interacting with very large ligands. N-glycosylated. In terms of tissue distribution, expressed in subpopulations of macrophages in the spleen and the medullary cord of lymph nodes (at protein level).

The protein localises to the cell membrane. Pattern recognition receptor (PRR) which binds Gram-positive and Gram-negative bacteria. Also plays a role in binding of unopsonized particles by alveolar macrophages. Binds to the secretoglobin SCGB3A2. The sequence is that of Macrophage receptor MARCO (Marco) from Mus musculus (Mouse).